The chain runs to 371 residues: Peptide chain release factor 2 (371 aa).

Glutamine 251 carries the N5-methylglutamine modification.

Belongs to the prokaryotic/mitochondrial release factor family. In terms of processing, methylated by PrmC. Methylation increases the termination efficiency of RF2.

It is found in the cytoplasm. Functionally, peptide chain release factor 2 directs the termination of translation in response to the peptide chain termination codons UGA and UAA. The sequence is that of Peptide chain release factor 2 from Arthrobacter sp. (strain FB24).